Reading from the N-terminus, the 109-residue chain is Nucleoid-associated protein BUsg_467 (109 aa).

Belongs to the YbaB/EbfC family. Homodimer.

It is found in the cytoplasm. It localises to the nucleoid. Binds to DNA and alters its conformation. May be involved in regulation of gene expression, nucleoid organization and DNA protection. This is Nucleoid-associated protein BUsg_467 from Buchnera aphidicola subsp. Schizaphis graminum (strain Sg).